A 461-amino-acid chain; its full sequence is Vitamin K-dependent protein C (461 aa).

The signal sequence occupies residues 1–18 (MWQLTSLLLFVATWGISG). An O-linked (GalNAc...) threonine glycan is attached at T19. A propeptide spanning residues 19–42 (TPAPLDSVFSSSERAHQVLRIRKR) is cleaved from the precursor. Positions 43 to 88 (ANSFLEELRHSSLERECIEEICDFEEAKEIFQNVDDTLAFWSKHVD) constitute a Gla domain. 9 positions are modified to 4-carboxyglutamate: E48, E49, E56, E58, E61, E62, E67, E68, and E71. An intrachain disulfide couples C59 to C64. Cystine bridges form between C92/C111, C101/C106, C105/C120, and C122/C131. EGF-like domains follow at residues 97-132 (LEHP…RFCQ) and 136-176 (SFLN…LQCH). D113 bears the (3R)-3-hydroxyaspartate mark. N-linked (GlcNAc...) asparagine glycosylation occurs at N139. Intrachain disulfides connect C140-C151, C147-C160, C162-C175, C183-C319, and C238-C254. In terms of domain architecture, Peptidase S1 spans 212 to 450 (LIDGKMTRRG…YLDWIHGHIR (239 aa)). H253 acts as the Charge relay system in catalysis. N-linked (GlcNAc...) asparagine glycosylation occurs at N290. Catalysis depends on D299, which acts as the Charge relay system. At S347 the chain carries Phosphoserine; by FAM20C. A glycan (N-linked (GlcNAc...) asparagine) is linked at N355. N-linked (GlcNAc...) asparagine; atypical; partial glycosylation is present at N371. Disulfide bonds link C373–C387 and C398–C426. S402 acts as the Charge relay system in catalysis.

Belongs to the peptidase S1 family. In terms of assembly, synthesized as a single chain precursor, which is cleaved into a light chain and a heavy chain held together by a disulfide bond. The enzyme is then activated by thrombin, which cleaves a tetradecapeptide from the amino end of the heavy chain; this reaction, which occurs at the surface of endothelial cells, is strongly promoted by thrombomodulin. Interacts (activated) with iripin-8, a serine protease inhibitor from Ixodes ricinus saliva. The vitamin K-dependent, enzymatic carboxylation of some Glu residues allows the modified protein to bind calcium. Post-translationally, N- and O-glycosylated. Partial (70%) N-glycosylation of Asn-371 with an atypical N-X-C site produces a higher molecular weight form referred to as alpha. The lower molecular weight form, not N-glycosylated at Asn-371, is beta. O-glycosylated with core 1 or possibly core 8 glycans. In terms of processing, the iron and 2-oxoglutarate dependent 3-hydroxylation of aspartate and asparagine is (R) stereospecific within EGF domains. May be phosphorylated on a Ser or Thr in a region (AA 25-30) of the propeptide. Plasma; synthesized in the liver.

It is found in the secreted. It localises to the golgi apparatus. Its subcellular location is the endoplasmic reticulum. The enzyme catalyses Degradation of blood coagulation factors Va and VIIIa.. In terms of biological role, protein C is a vitamin K-dependent serine protease that regulates blood coagulation by inactivating factors Va and VIIIa in the presence of calcium ions and phospholipids. Exerts a protective effect on the endothelial cell barrier function. The chain is Vitamin K-dependent protein C (PROC) from Homo sapiens (Human).